We begin with the raw amino-acid sequence, 292 residues long: Elongation factor Ts (292 aa).

Residues 81–84 (TDFV) form an involved in Mg(2+) ion dislocation from EF-Tu region.

It belongs to the EF-Ts family.

Its subcellular location is the cytoplasm. Associates with the EF-Tu.GDP complex and induces the exchange of GDP to GTP. It remains bound to the aminoacyl-tRNA.EF-Tu.GTP complex up to the GTP hydrolysis stage on the ribosome. The polypeptide is Elongation factor Ts (Psychromonas ingrahamii (strain DSM 17664 / CCUG 51855 / 37)).